A 36-amino-acid polypeptide reads, in one-letter code: Kappa-theraphotoxin-Pg1b (36 aa).

3 disulfide bridges follow: cysteine 4-cysteine 19, cysteine 11-cysteine 24, and cysteine 18-cysteine 31.

This sequence belongs to the neurotoxin 10 (Hwtx-1) family. 44 (Jztx-4) subfamily. As to expression, expressed by the venom gland.

The protein resides in the secreted. In terms of biological role, gating modifier of Kv2.1/KCNB1, Kv2.2/KCNB2 and Kv4.3/KCND3 channels. The chain is Kappa-theraphotoxin-Pg1b from Chilobrachys guangxiensis (Chinese earth tiger tarantula).